The sequence spans 99 residues: Large ribosomal subunit protein bL27 (99 aa).

A propeptide spanning residues 1-9 (MLIMNLQLF) is cleaved from the precursor.

The protein belongs to the bacterial ribosomal protein bL27 family. In terms of processing, the N-terminus is cleaved by ribosomal processing cysteine protease Prp.

The polypeptide is Large ribosomal subunit protein bL27 (Clostridium botulinum (strain Alaska E43 / Type E3)).